We begin with the raw amino-acid sequence, 442 residues long: MSEMTPREIVHELDRHIIGQADAKRAVAVALRNRWRRMQLDEEMRHEVTPKNILMIGPTGVGKTEIARRLAKLANAPFIKVEATKFTEVGYVGKEVDSIIRDLTDAAIKLVRETEMEKMKYRAEEAAEERILDALLPNPRNSWGEEEKADNSNTRQIFRKKLREGQLDDKEIELELAASPMGVEIMTPPGMEEMANQLQGLFQNLGQNQKKKRKIKVKEAMKALIEEEAARLVNPEELKQKAIAAVENNGIVFLDEIDKICKRGESSGPDVSREGVQRDLLPLVEGCTVNTKHGMVKTDHILFVASGAFQIAKPSDLIPELQGRLPIRVELTALTTDDFERILTEPNASLTDQYQALMATEGVKIEFTKDGIRRLAEAAWQVNERTENIGARRLHTVMERLMEDISYDASEKSGETFVIDTDYVNAHLGKLIEDEDLSRFIL.

ATP contacts are provided by residues isoleucine 18, 60–65 (GVGKTE), aspartate 255, glutamate 320, and arginine 392.

The protein belongs to the ClpX chaperone family. HslU subfamily. As to quaternary structure, a double ring-shaped homohexamer of HslV is capped on each side by a ring-shaped HslU homohexamer. The assembly of the HslU/HslV complex is dependent on binding of ATP.

It localises to the cytoplasm. ATPase subunit of a proteasome-like degradation complex; this subunit has chaperone activity. The binding of ATP and its subsequent hydrolysis by HslU are essential for unfolding of protein substrates subsequently hydrolyzed by HslV. HslU recognizes the N-terminal part of its protein substrates and unfolds these before they are guided to HslV for hydrolysis. This Aeromonas hydrophila subsp. hydrophila (strain ATCC 7966 / DSM 30187 / BCRC 13018 / CCUG 14551 / JCM 1027 / KCTC 2358 / NCIMB 9240 / NCTC 8049) protein is ATP-dependent protease ATPase subunit HslU.